A 157-amino-acid polypeptide reads, in one-letter code: Protein Smg homolog (157 aa).

Belongs to the Smg family.

This chain is Protein Smg homolog, found in Stenotrophomonas maltophilia (strain R551-3).